We begin with the raw amino-acid sequence, 295 residues long: Indole-3-glycerol phosphate synthase (295 aa).

It belongs to the TrpC family.

The catalysed reaction is 1-(2-carboxyphenylamino)-1-deoxy-D-ribulose 5-phosphate + H(+) = (1S,2R)-1-C-(indol-3-yl)glycerol 3-phosphate + CO2 + H2O. The protein operates within amino-acid biosynthesis; L-tryptophan biosynthesis; L-tryptophan from chorismate: step 4/5. The protein is Indole-3-glycerol phosphate synthase of Prochlorococcus marinus (strain NATL2A).